Consider the following 84-residue polypeptide: Small ribosomal subunit protein uS17 (84 aa).

The protein belongs to the universal ribosomal protein uS17 family. Part of the 30S ribosomal subunit.

Functionally, one of the primary rRNA binding proteins, it binds specifically to the 5'-end of 16S ribosomal RNA. The protein is Small ribosomal subunit protein uS17 of Photobacterium profundum (strain SS9).